The primary structure comprises 35 residues: MEALVYTFLLXSTLGIIFFAIFFREPPKVPDRGGK.

The chain crosses the membrane as a helical span at residues 3-23 (ALVYTFLLXSTLGIIFFAIFF).

Belongs to the PsbT family. As to quaternary structure, PSII is composed of 1 copy each of membrane proteins PsbA, PsbB, PsbC, PsbD, PsbE, PsbF, PsbH, PsbI, PsbJ, PsbK, PsbL, PsbM, PsbT, PsbY, PsbZ, Psb30/Ycf12, at least 3 peripheral proteins of the oxygen-evolving complex and a large number of cofactors. It forms dimeric complexes.

It is found in the plastid. It localises to the chloroplast thylakoid membrane. Found at the monomer-monomer interface of the photosystem II (PS II) dimer, plays a role in assembly and dimerization of PSII. PSII is a light-driven water plastoquinone oxidoreductase, using light energy to abstract electrons from H(2)O, generating a proton gradient subsequently used for ATP formation. This is Photosystem II reaction center protein T from Cunninghamia lanceolata (China fir).